The primary structure comprises 92 residues: Small ribosomal subunit protein uS19 (92 aa).

This sequence belongs to the universal ribosomal protein uS19 family.

Its function is as follows. Protein S19 forms a complex with S13 that binds strongly to the 16S ribosomal RNA. This Bacillus cytotoxicus (strain DSM 22905 / CIP 110041 / 391-98 / NVH 391-98) protein is Small ribosomal subunit protein uS19.